The chain runs to 845 residues: Extended synaptotagmin-2 (845 aa).

Gly residues predominate over residues 1-17 (MSSAGGEGPEAGPGRAG). Positions 1–26 (MSSAGGEGPEAGPGRAGGRSEPEAPG) are disordered. The Cytoplasmic segment spans residues 1-27 (MSSAGGEGPEAGPGRAGGRSEPEAPGS). A helical membrane pass occupies residues 28-48 (ALSVDLPGLLGQLARSFALLL). At 49 to 51 (PVY) the chain is on the lumenal side. A helical membrane pass occupies residues 52 to 72 (ALGYLGLSFSWVLLALGLLAW). Topologically, residues 73 to 845 (CRRSRGLKAS…EDGTRPQVIT (773 aa)) are cytoplasmic. One can recognise an SMP-LTD domain in the interval 115–294 (DTERAEWLNK…LPNRITVPLV (180 aa)). C2 domains lie at 293-413 (LVSE…DEWF) and 442-563 (VLAD…QLSN). Residues Lys-324, Asp-325, Asp-337, Asp-384, Glu-385, Asp-386, Asp-388, Asp-390, and Asp-391 each coordinate Ca(2+). The segment at 584 to 664 (QERPPDYQHS…RDLGRSSSSL (81 aa)) is disordered. Residues 612 to 628 (SQMSASPGTGGANTAPS) are compositionally biased toward polar residues. A phosphoserine mark is found at Ser-615 and Ser-617. Thr-629 carries the phosphothreonine modification. Residues 634–645 (VDDKPAMEEKPQ) show a composition bias toward basic and acidic residues. Phosphoserine is present on residues Ser-660, Ser-662, Ser-663, Ser-667, Ser-679, Ser-682, and Ser-685. A C2 3 domain is found at 710 to 832 (PLGQIQLTIR…ELAKGWTQWY (123 aa)). A required for phosphatidylinositol 4,5-bisphosphate-dependent location at the cell membrane region spans residues 757–764 (KRRSGRRK).

Belongs to the extended synaptotagmin family. In terms of assembly, homodimer. Interacts with ESYT1 and ESYT3. Interacts with FGFR1 that has been activated by FGF1 binding. Interacts with the AP-2 complex; identified in a complex with the AP-2 complex and FGFR1.

It is found in the cell membrane. Its subcellular location is the endoplasmic reticulum membrane. Tethers the endoplasmic reticulum to the cell membrane and promotes the formation of appositions between the endoplasmic reticulum and the cell membrane. Binds glycerophospholipids in a barrel-like domain and may play a role in cellular lipid transport. Plays a role in FGF signaling via its role in the rapid internalization of FGFR1 that has been activated by FGF1 binding; this occurs most likely via the AP-2 complex. Promotes the localization of SACM1L at endoplasmic reticulum-plasma membrane contact sites (EPCS). This chain is Extended synaptotagmin-2 (Esyt2), found in Mus musculus (Mouse).